Here is a 692-residue protein sequence, read N- to C-terminus: Protein arginine N-methyltransferase 7 (692 aa).

SAM-dependent MTase PRMT-type domains follow at residues 14-359 and 368-692; these read ENSW…YSLW and AKTV…QEKR.

The protein belongs to the class I-like SAM-binding methyltransferase superfamily. Protein arginine N-methyltransferase family. PRMT7 subfamily.

Its function is as follows. Essential arginine methyltransferase that can both catalyze the formation of omega-N monomethylarginine (MMA) and symmetrical dimethylarginine (sDMA). Specifically mediates the symmetrical dimethylation of arginine residues in the small nuclear ribonucleoproteins SmD1 and SmD3. The protein is Protein arginine N-methyltransferase 7 (Art7) of Drosophila pseudoobscura pseudoobscura (Fruit fly).